The following is an 881-amino-acid chain: Envelope glycoprotein gp160 (881 aa).

An N-terminal signal peptide occupies residues 1-19 (MGCLGNQLLIAILLLSVYG). Residues 20–696 (IYCTQYVTVF…ASWIKYIQYG (677 aa)) are Extracellular-facing. N-linked (GlcNAc...) asparagine; by host glycosylation is present at Asn-37. Cysteines 44 and 57 form a disulfide. N-linked (GlcNAc...) asparagine; by host glycosylation is found at Asn-70, Asn-114, Asn-148, Asn-158, Asn-186, Asn-200, Asn-204, Asn-214, Asn-246, Asn-249, Asn-280, Asn-286, Asn-297, Asn-308, Asn-318, Asn-373, and Asn-379. Cystine bridges form between Cys-101/Cys-222, Cys-108/Cys-213, Cys-113/Cys-170, Cys-235/Cys-265, and Cys-245/Cys-257. Residues 113 to 169 (CNKSETDRWGLTKSSTTITTAAPTSAPVSEKIDMVNETSSCIAQNNCTGLEQEQMIS) form a V1 region. Residues 170-213 (CKFTMTGLKRDKTKEYNETWYSTDLVCEQGNSTDNESRCYMNHC) form a V2 region. The tract at residues 313 to 345 (CRRPGNKTVLPVTIMSGLVFHSQPLTDRPKQAW) is V3. Residues Cys-313 and Cys-346 are joined by a disulfide bond. Disulfide bonds link Cys-397–Cys-461 and Cys-404–Cys-434. The V4 stretch occupies residues 404-434 (CKMNWFLNWVEDRDVTTQRPKERHRRNYVPC). N-linked (GlcNAc...) asparagine; by host glycosylation is found at Asn-462 and Asn-478. Residues 477–484 (GNQTSITM) form a V5 region. Residues 528 to 548 (GVFVLGFLGFLATAGSAMGAA) form a fusion peptide region. The immunosuppression stretch occupies residues 591–607 (LQTRVTAIEKYLEDQAQ). Asn-627, Asn-636, and Asn-652 each carry an N-linked (GlcNAc...) asparagine; by host glycan. A coiled-coil region spans residues 636-668 (NDTWQEWERKVDFLEENITALLEEAQIQQEKNM). Positions 673–694 (KLNSWDVFGNWFDLASWIKYIQ) are MPER; binding to GalCer. The chain crosses the membrane as a helical span at residues 697–717 (IYVVVGVILLRIVIYIVQMLA). Residues 718–881 (KLRQGYRPVF…IRQGLELTLL (164 aa)) are Cytoplasmic-facing. Positions 723–726 (YRPV) match the YXXV motif; contains endocytosis signal motif. Residues 737–761 (THTQQDPALPTREGKEGDGGEGGGN) form a disordered region. The S-palmitoyl cysteine; by host moiety is linked to residue Cys-789. Residues 880 to 881 (LL) carry the Di-leucine internalization motif motif.

The mature envelope protein (Env) consists of a homotrimer of non-covalently associated gp120-gp41 heterodimers. The resulting complex protrudes from the virus surface as a spike. Interacts with host CD4 and CCR5. Gp120 also interacts with the C-type lectins CD209/DC-SIGN and CLEC4M/DC-SIGNR (collectively referred to as DC-SIGN(R)). As to quaternary structure, the mature envelope protein (Env) consists of a homotrimer of non-covalently associated gp120-gp41 heterodimers. The resulting complex protrudes from the virus surface as a spike. Post-translationally, specific enzymatic cleavages in vivo yield mature proteins. Envelope glycoproteins are synthesized as an inactive precursor that is heavily N-glycosylated and processed likely by host cell furin in the Golgi to yield the mature SU and TM proteins. The cleavage site between SU and TM requires the minimal sequence [KR]-X-[KR]-R. Palmitoylation of the transmembrane protein and of Env polyprotein (prior to its proteolytic cleavage) is essential for their association with host cell membrane lipid rafts. Palmitoylation is therefore required for envelope trafficking to classical lipid rafts, but not for viral replication.

Its subcellular location is the virion membrane. The protein localises to the host cell membrane. The protein resides in the host endosome membrane. Its function is as follows. The surface protein gp120 (SU) attaches the virus to the host lymphoid cell by binding to the primary receptor CD4. This interaction induces a structural rearrangement creating a high affinity binding site for a chemokine coreceptor like CCR5. This peculiar 2 stage receptor-interaction strategy allows gp120 to maintain the highly conserved coreceptor-binding site in a cryptic conformation, protected from neutralizing antibodies. These changes are transmitted to the transmembrane protein gp41 and are thought to activate its fusogenic potential by unmasking its fusion peptide. Surface protein gp120 (SU) may target the virus to gut-associated lymphoid tissue (GALT) by binding host ITGA4/ITGB7 (alpha-4/beta-7 integrins), a complex that mediates T-cell migration to the GALT. Interaction between gp120 and ITGA4/ITGB7 would allow the virus to enter GALT early in the infection, infecting and killing most of GALT's resting CD4+ T-cells. This T-cell depletion is believed to be the major insult to the host immune system leading to AIDS. Functionally, the surface protein gp120 is a ligand for CD209/DC-SIGN and CLEC4M/DC-SIGNR, which are respectively found on dendritic cells (DCs), and on endothelial cells of liver sinusoids and lymph node sinuses. These interactions allow capture of viral particles at mucosal surfaces by these cells and subsequent transmission to permissive cells. DCs are professional antigen presenting cells, critical for host immunity by inducing specific immune responses against a broad variety of pathogens. They act as sentinels in various tissues where they take up antigen, process it, and present it to T-cells following migration to lymphoid organs. SIV subverts the migration properties of dendritic cells to gain access to CD4+ T-cells in lymph nodes. Virus transmission to permissive T-cells occurs either in trans (without DCs infection, through viral capture and transmission), or in cis (following DCs productive infection, through the usual CD4-gp120 interaction), thereby inducing a robust infection. In trans infection, bound virions remain infectious over days and it is proposed that they are not degraded, but protected in non-lysosomal acidic organelles within the DCs close to the cell membrane thus contributing to the viral infectious potential during DCs' migration from the periphery to the lymphoid tissues. On arrival at lymphoid tissues, intact virions recycle back to DCs' cell surface allowing virus transmission to CD4+ T-cells. Virion capture also seems to lead to MHC-II-restricted viral antigen presentation, and probably to the activation of SIV-specific CD4+ cells. In terms of biological role, the transmembrane protein gp41 (TM) acts as a class I viral fusion protein. Under the current model, the protein has at least 3 conformational states: pre-fusion native state, pre-hairpin intermediate state, and post-fusion hairpin state. During fusion of viral and target intracellular membranes, the coiled coil regions (heptad repeats) assume a trimer-of-hairpins structure, positioning the fusion peptide in close proximity to the C-terminal region of the ectodomain. The formation of this structure appears to drive apposition and subsequent fusion of viral and target cell membranes. Complete fusion occurs in host cell endosomes. The virus undergoes clathrin-dependent internalization long before endosomal fusion, thus minimizing the surface exposure of conserved viral epitopes during fusion and reducing the efficacy of inhibitors targeting these epitopes. Membranes fusion leads to delivery of the nucleocapsid into the cytoplasm. Its function is as follows. The envelope glycoprotein gp160 precursor down-modulates cell surface CD4 antigen by interacting with it in the endoplasmic reticulum and blocking its transport to the cell surface. The gp120-gp41 heterodimer allows rapid transcytosis of the virus through CD4 negative cells such as simple epithelial monolayers of the intestinal, rectal and endocervical epithelial barriers. Both gp120 and gp41 specifically recognize glycosphingolipids galactosyl-ceramide (GalCer) or 3' sulfo-galactosyl-ceramide (GalS) present in the lipid rafts structures of epithelial cells. Binding to these alternative receptors allows the rapid transcytosis of the virus through the epithelial cells. This transcytotic vesicle-mediated transport of virions from the apical side to the basolateral side of the epithelial cells does not involve infection of the cells themselves. The polypeptide is Envelope glycoprotein gp160 (env) (Simian immunodeficiency virus (isolate K6W) (SIV-mac)).